The sequence spans 269 residues: Ribosomal RNA small subunit methyltransferase A (269 aa).

His11, Leu13, Gly38, Glu59, Asp84, and Asn105 together coordinate S-adenosyl-L-methionine.

It belongs to the class I-like SAM-binding methyltransferase superfamily. rRNA adenine N(6)-methyltransferase family. RsmA subfamily.

The protein localises to the cytoplasm. It catalyses the reaction adenosine(1518)/adenosine(1519) in 16S rRNA + 4 S-adenosyl-L-methionine = N(6)-dimethyladenosine(1518)/N(6)-dimethyladenosine(1519) in 16S rRNA + 4 S-adenosyl-L-homocysteine + 4 H(+). Its function is as follows. Specifically dimethylates two adjacent adenosines (A1518 and A1519) in the loop of a conserved hairpin near the 3'-end of 16S rRNA in the 30S particle. May play a critical role in biogenesis of 30S subunits. The sequence is that of Ribosomal RNA small subunit methyltransferase A from Acaryochloris marina (strain MBIC 11017).